Reading from the N-terminus, the 284-residue chain is Bifunctional protein FolD (284 aa).

NADP(+)-binding positions include 165–167, Ser190, and Ile231; that span reads GRS.

This sequence belongs to the tetrahydrofolate dehydrogenase/cyclohydrolase family. In terms of assembly, homodimer.

The catalysed reaction is (6R)-5,10-methylene-5,6,7,8-tetrahydrofolate + NADP(+) = (6R)-5,10-methenyltetrahydrofolate + NADPH. It catalyses the reaction (6R)-5,10-methenyltetrahydrofolate + H2O = (6R)-10-formyltetrahydrofolate + H(+). It participates in one-carbon metabolism; tetrahydrofolate interconversion. Catalyzes the oxidation of 5,10-methylenetetrahydrofolate to 5,10-methenyltetrahydrofolate and then the hydrolysis of 5,10-methenyltetrahydrofolate to 10-formyltetrahydrofolate. The polypeptide is Bifunctional protein FolD (Dechloromonas aromatica (strain RCB)).